The primary structure comprises 212 residues: Thymidylate kinase (212 aa).

Alanine 2 is modified (N-acetylalanine). Residues 16-21 (RAGKTT) and arginine 97 each bind ATP. An LID region spans residues 133–157 (LQLQLLDAAARGEFGLERYETGTFQ). ATP contacts are provided by lysine 182 and arginine 192.

The protein belongs to the thymidylate kinase family. In terms of assembly, homodimer. The cofactor is Mg(2+).

The enzyme catalyses dTMP + ATP = dTDP + ADP. It functions in the pathway pyrimidine metabolism; dTTP biosynthesis. Functionally, catalyzes the phosphorylation of thymidine monophosphate (dTMP) to thymidine diphosphate (dTDP), the immediate precursor for the DNA building block dTTP, with ATP as the preferred phosphoryl donor in the presence of Mg(2+). The sequence is that of Thymidylate kinase (Dtymk) from Mus musculus (Mouse).